We begin with the raw amino-acid sequence, 583 residues long: Proteasome-associated ATPase (583 aa).

The stretch at 2–90 (ASREDRDAAN…REEVDRLAQP (89 aa)) forms a coiled coil. ATP is bound at residue 271 to 276 (GCGKTL). Residues 582-583 (YL) form a docks into pockets in the proteasome alpha-ring region.

This sequence belongs to the AAA ATPase family. In terms of assembly, homohexamer. Assembles into a hexameric ring structure that caps the 20S proteasome core. Strongly interacts with the prokaryotic ubiquitin-like protein Pup through a hydrophobic interface; the interacting region of ARC lies in its N-terminal coiled-coil domain. There is one Pup binding site per ARC hexamer ring. Upon ATP-binding, the C-terminus of ARC interacts with the alpha-rings of the proteasome core, possibly by binding to the intersubunit pockets.

It functions in the pathway protein degradation; proteasomal Pup-dependent pathway. In terms of biological role, ATPase which is responsible for recognizing, binding, unfolding and translocation of pupylated proteins into the bacterial 20S proteasome core particle. May be essential for opening the gate of the 20S proteasome via an interaction with its C-terminus, thereby allowing substrate entry and access to the site of proteolysis. Thus, the C-termini of the proteasomal ATPase may function like a 'key in a lock' to induce gate opening and therefore regulate proteolysis. This Acidothermus cellulolyticus (strain ATCC 43068 / DSM 8971 / 11B) protein is Proteasome-associated ATPase.